Here is a 77-residue protein sequence, read N- to C-terminus: Large ribosomal subunit protein bL28 (77 aa).

Residues 1-20 (MSRVCQVTGKGPVTGNNISH) are disordered.

It belongs to the bacterial ribosomal protein bL28 family.

The polypeptide is Large ribosomal subunit protein bL28 (Pseudomonas syringae pv. tomato (strain ATCC BAA-871 / DC3000)).